Consider the following 260-residue polypeptide: Small ribosomal subunit protein eS1 (260 aa).

At Lys-30 the chain carries N6-acetyllysine; alternate. A Glycyl lysine isopeptide (Lys-Gly) (interchain with G-Cter in SUMO2); alternate cross-link involves residue Lys-30. Position 52 is an N6-acetyllysine (Lys-52). Residue Tyr-151 is modified to ADP-ribosyltyrosine. The interval 228-260 is disordered; it reads HGEGSSSGKATGDETGAKVERADGYEPPVQESV. Ser-232 and Ser-233 each carry phosphoserine. A compositionally biased stretch (basic and acidic residues) spans 238–251; that stretch reads TGDETGAKVERADG. Residue Lys-245 is modified to N6-acetyllysine; alternate. Residue Lys-245 forms a Glycyl lysine isopeptide (Lys-Gly) (interchain with G-Cter in SUMO2); alternate linkage. The residue at position 252 (Tyr-252) is a Phosphotyrosine. Ser-259 is modified (phosphoserine).

The protein belongs to the eukaryotic ribosomal protein eS1 family. Component of the small ribosomal subunit. Mature ribosomes consist of a small (40S) and a large (60S) subunit. The 40S subunit contains about 33 different proteins and 1 molecule of RNA (18S). The 60S subunit contains about 49 different proteins and 3 molecules of RNA (28S, 5.8S and 5S). Identified in a IGF2BP1-dependent mRNP granule complex containing untranslated mRNAs. Binds with high affinity to IPO4. Interacts with DDIT3. Part of the small subunit (SSU) processome, composed of more than 70 proteins and the RNA chaperone small nucleolar RNA (snoRNA) U3. ADP-ribosylated at Tyr-151 by PARP1 in presence of HPF1.

The protein localises to the cytoplasm. It is found in the nucleus. Its subcellular location is the nucleolus. In terms of biological role, component of the small ribosomal subunit. The ribosome is a large ribonucleoprotein complex responsible for the synthesis of proteins in the cell. Part of the small subunit (SSU) processome, first precursor of the small eukaryotic ribosomal subunit. During the assembly of the SSU processome in the nucleolus, many ribosome biogenesis factors, an RNA chaperone and ribosomal proteins associate with the nascent pre-rRNA and work in concert to generate RNA folding, modifications, rearrangements and cleavage as well as targeted degradation of pre-ribosomal RNA by the RNA exosome. May play a role during erythropoiesis through regulation of transcription factor DDIT3. In Felis catus (Cat), this protein is Small ribosomal subunit protein eS1.